Reading from the N-terminus, the 739-residue chain is Potassium transporter 26 (739 aa).

Over 1–81 (MEYHHRPHSP…RQVALLSFQS (81 aa)) the chain is Cytoplasmic. Residues 82–102 (LGVVYGDLGTSPLYVFSSISL) traverse the membrane as a helical segment. Topologically, residues 103-112 (DDPGEADFVG) are extracellular. A helical transmembrane segment spans residues 113–133 (ILSIILWTFTMICLVKYVFIV). Residues 134–198 (LKADDHGEGG…KFLEQSTKWQ (65 aa)) lie on the Cytoplasmic side of the membrane. A helical membrane pass occupies residues 199-219 (AVITYIVLAGTCMVLGDGALT). Residues 220–236 (PAISVLSAVQGIQSRSS) are Extracellular-facing. Residues 237-257 (SITQAHVVLLSVIILFILFFF) form a helical membrane-spanning segment. Topologically, residues 258-268 (QKHGTSKVSFT) are cytoplasmic. The chain crosses the membrane as a helical span at residues 269-289 (FSPIMILWFTFVAFIGLYNII). Residues 290–318 (KHYPPILKAVSPHYIIIYFIRNKRAAWET) lie on the Extracellular side of the membrane. Residues 319 to 339 (LGAIVLCITGAEAMFADLGHF) form a helical membrane-spanning segment. At 340–347 (NKSSIQMA) the chain is on the cytoplasmic side. A helical transmembrane segment spans residues 348-368 (FSVIVYPSMILAYAGQAAFLV). Over 369 to 385 (KNPSKLSTTFYSSTPEP) the chain is Extracellular. Residues 386–406 (LFWPMFIIATLAAIVASQALI) traverse the membrane as a helical segment. The Cytoplasmic portion of the chain corresponds to 407 to 437 (SASFSIIRQSIALGCFPRVTMKHTSGKHEGQ). Residues 438–458 (VYSPEINYFLMVACILITVGF) traverse the membrane as a helical segment. At 459–469 (KGGPEIGQAFG) the chain is on the extracellular side. Residues 470-490 (VAVIFVMLFTTNLMTVVMLII) traverse the membrane as a helical segment. Residues 491 to 494 (WESN) are Cytoplasmic-facing. The chain crosses the membrane as a helical span at residues 495–515 (IALASLFFVFFFSIEGIYMTS). Over 516 to 519 (LMNK) the chain is Extracellular. The chain crosses the membrane as a helical span at residues 520-540 (ILQGGWVPFAITAFFLIITLS). The Cytoplasmic portion of the chain corresponds to 541–739 (WTYGRSKKGE…TLQVGMLYEI (199 aa)).

This sequence belongs to the HAK/KUP transporter (TC 2.A.72.3) family.

Its subcellular location is the membrane. High-affinity potassium transporter. This Oryza sativa subsp. japonica (Rice) protein is Potassium transporter 26 (HAK26).